A 488-amino-acid polypeptide reads, in one-letter code: MQYRDLRDFISGLEQRSELKRIQVPVSPVLEMTEVCDRTLRAKGPALLFENPTGYDIPVLGNLFGTPERVALGMGAEAVSELREIGKLLAFLKEPEPPKGLKDAWSKLPIFRKIISMAPKVVKDAVCQEVVIEGDDVDLGMLPVQTCWPGDVGPLITWGLTVTKGPNKDRQNLGIYRQQVIGRNKVIMRWLSHRGGALDYREWCEKHPGQPFPVSVALGADPATILGAVTPVPDSLSEYAFAGLLRGNRTELVKCRGNDLQVPATAEIILEGVIHPGEMADEGPYGDHTGYYNEVDSFPVFTVERITHRIKPIYHSTYTGRPPDEPAILGVALNEVFVPILQKQFPEITDFYLPPEGCSYRMAVVTMKKQYPGHAKRVMLGVWSFLRQFMYTKFVIVTDDDINARDWNDVIWAITTRMDPKRDTVMIDNTPIDYLDFASPVSGLGSKMGLDATHKWPGETTREWGRVIVKDEAVTRRIDAIWNQLGID.

Mn(2+) is bound at residue Asn-172. Prenylated FMN is bound by residues 175–177 (IYR), 189–191 (RWL), and 194–195 (RG). Glu-238 is a binding site for Mn(2+). The active-site Proton donor is the Asp-287.

It belongs to the UbiD family. In terms of assembly, homohexamer. It depends on prenylated FMN as a cofactor. Requires Mn(2+) as cofactor.

It localises to the cell membrane. The enzyme catalyses a 4-hydroxy-3-(all-trans-polyprenyl)benzoate + H(+) = a 2-(all-trans-polyprenyl)phenol + CO2. It participates in cofactor biosynthesis; ubiquinone biosynthesis. Catalyzes the decarboxylation of 3-octaprenyl-4-hydroxy benzoate to 2-octaprenylphenol, an intermediate step in ubiquinone biosynthesis. In Pseudomonas fluorescens (strain ATCC BAA-477 / NRRL B-23932 / Pf-5), this protein is 3-octaprenyl-4-hydroxybenzoate carboxy-lyase.